The chain runs to 553 residues: Probable cytochrome P450 301a1, mitochondrial (553 aa).

Position 502 (C502) interacts with heme.

This sequence belongs to the cytochrome P450 family. Requires heme as cofactor.

The protein localises to the mitochondrion membrane. This is Probable cytochrome P450 301a1, mitochondrial (Cyp301a1) from Drosophila melanogaster (Fruit fly).